A 180-amino-acid chain; its full sequence is ATP synthase subunit delta (180 aa).

It belongs to the ATPase delta chain family. As to quaternary structure, F-type ATPases have 2 components, F(1) - the catalytic core - and F(0) - the membrane proton channel. F(1) has five subunits: alpha(3), beta(3), gamma(1), delta(1), epsilon(1). CF(0) has four main subunits: a(1), b(1), b'(1) and c(10-14). The alpha and beta chains form an alternating ring which encloses part of the gamma chain. F(1) is attached to F(0) by a central stalk formed by the gamma and epsilon chains, while a peripheral stalk is formed by the delta, b and b' chains.

It localises to the cellular thylakoid membrane. Functionally, f(1)F(0) ATP synthase produces ATP from ADP in the presence of a proton or sodium gradient. F-type ATPases consist of two structural domains, F(1) containing the extramembraneous catalytic core and F(0) containing the membrane proton channel, linked together by a central stalk and a peripheral stalk. During catalysis, ATP synthesis in the catalytic domain of F(1) is coupled via a rotary mechanism of the central stalk subunits to proton translocation. Its function is as follows. This protein is part of the stalk that links CF(0) to CF(1). It either transmits conformational changes from CF(0) to CF(1) or is implicated in proton conduction. The polypeptide is ATP synthase subunit delta (Prochlorococcus marinus (strain MIT 9312)).